We begin with the raw amino-acid sequence, 197 residues long: Imidazoleglycerol-phosphate dehydratase (197 aa).

This sequence belongs to the imidazoleglycerol-phosphate dehydratase family.

The protein resides in the cytoplasm. The enzyme catalyses D-erythro-1-(imidazol-4-yl)glycerol 3-phosphate = 3-(imidazol-4-yl)-2-oxopropyl phosphate + H2O. It functions in the pathway amino-acid biosynthesis; L-histidine biosynthesis; L-histidine from 5-phospho-alpha-D-ribose 1-diphosphate: step 6/9. This chain is Imidazoleglycerol-phosphate dehydratase, found in Leptospira biflexa serovar Patoc (strain Patoc 1 / Ames).